Consider the following 489-residue polypeptide: CBL-interacting serine/threonine-protein kinase 12 (489 aa).

A Protein kinase domain is found at 26–280 (YEMGKLLGHG…FPEIMENSWF (255 aa)). ATP contacts are provided by residues 32–40 (LGHGTFAKV) and K55. Catalysis depends on D148, which acts as the Proton acceptor. The segment at 166–195 (DFGLSAVSDQIRQDGLFHTFCGTPAYVAPE) is activation loop. A Phosphoserine modification is found at S170. At T184 the chain carries Phosphothreonine. One can recognise an NAF domain in the interval 336–360 (PRPASLNAFDIISFSQGFDLSGLFD). Residues 363–392 (GEGSRFVSGAPVSKIISKLEEIAKVVSFTV) form a PPI region.

Belongs to the protein kinase superfamily. CAMK Ser/Thr protein kinase family. SNF1 subfamily. Interacts with CBL2 and CBL3. The cofactor is Mn(2+). As to expression, expressed in roots and shoots.

It carries out the reaction L-seryl-[protein] + ATP = O-phospho-L-seryl-[protein] + ADP + H(+). It catalyses the reaction L-threonyl-[protein] + ATP = O-phospho-L-threonyl-[protein] + ADP + H(+). In terms of biological role, CIPK serine-threonine protein kinases interact with CBL proteins. Binding of a CBL protein to the regulatory NAF domain of CIPK protein lead to the activation of the kinase in a calcium-dependent manner. In Arabidopsis thaliana (Mouse-ear cress), this protein is CBL-interacting serine/threonine-protein kinase 12 (CIPK12).